Here is a 139-residue protein sequence, read N- to C-terminus: Immunogenic miracidial antigen 8I (139 aa).

The segment at 61-139 is disordered; sequence IDVGDEDYHD…PKKYGSGYKH (79 aa). The segment covering 64-85 has biased composition (acidic residues); sequence GDEDYHDGDDDVDYTDDVDDVD. Residues 90-103 are compositionally biased toward polar residues; it reads SPSQLLQGGYQRNQ.

It belongs to the immunogenic miracidial antigen family.

In Schistosoma japonicum (Blood fluke), this protein is Immunogenic miracidial antigen 8I (8I).